The primary structure comprises 259 residues: MVVLKLGKNYPIDRDSRGRYRHSYVFMRGANVEVKLLNHEELLKGKITTIEEYYCVLDVEGTSGSYQVTVNFSEVKYIKHEEFPTVEERSPKYSKGDKKTSFVFKIGEKIGCVFKDGKGIKGTLLSEDAYYLYVKSEKENYYTIMKGALSYIAHVKHEPLLLTNDFYTEEMKLADYKKPTEYVFSVGDTITVYFPSGKNVSGVVLDESKYWVLLQTEKRQITIFKGSYSYFKHETYETKAYLYVENRKLRKQLRSGDTN.

This is an uncharacterized protein from Bacillus anthracis.